A 763-amino-acid polypeptide reads, in one-letter code: Putative pentatricopeptide repeat-containing protein At1g74580 (763 aa).

19 PPR repeats span residues 39 to 69 (TLST…MREN), 75 to 109 (LEGV…DCEP), 110 to 144 (TVFS…GITP), 145 to 179 (DVYS…GCEM), 180 to 214 (NVVA…GVSL), 215 to 249 (CLST…GVLP), 250 to 284 (NLFT…GPKP), 285 to 319 (DVIT…GLEP), 320 to 354 (DSYT…GFVP), 355 to 389 (DQFT…GIKP), 390 to 424 (NVIL…GLIP), 425 to 459 (EVQT…GYFP), 460 to 494 (DIFT…GVDP), 495 to 529 (DVYT…GCAP), 530 to 564 (NLFT…SVNP), 565 to 595 (DAVT…MEEA), 601 to 635 (STPT…CLGP), 636 to 670 (DGYT…GFIP), and 671 to 705 (SLTT…GLVP).

This sequence belongs to the PPR family. P subfamily.

This chain is Putative pentatricopeptide repeat-containing protein At1g74580, found in Arabidopsis thaliana (Mouse-ear cress).